Here is a 121-residue protein sequence, read N- to C-terminus: Ribonuclease P protein component (121 aa).

The protein belongs to the RnpA family. In terms of assembly, consists of a catalytic RNA component (M1 or rnpB) and a protein subunit.

It catalyses the reaction Endonucleolytic cleavage of RNA, removing 5'-extranucleotides from tRNA precursor.. Functionally, RNaseP catalyzes the removal of the 5'-leader sequence from pre-tRNA to produce the mature 5'-terminus. It can also cleave other RNA substrates such as 4.5S RNA. The protein component plays an auxiliary but essential role in vivo by binding to the 5'-leader sequence and broadening the substrate specificity of the ribozyme. This is Ribonuclease P protein component from Coxiella burnetii (strain Dugway 5J108-111).